A 287-amino-acid polypeptide reads, in one-letter code: Arylamine N-acetyltransferase, liver isozyme (287 aa).

The active-site Acyl-thioester intermediate is cysteine 68. Active-site residues include histidine 107 and aspartate 122.

This sequence belongs to the arylamine N-acetyltransferase family.

The enzyme catalyses an arylamine + acetyl-CoA = an N-acetylarylamine + CoA. The chain is Arylamine N-acetyltransferase, liver isozyme from Gallus gallus (Chicken).